A 2176-amino-acid polypeptide reads, in one-letter code: MFSSMWRLPLWTLLALHRIHSAGAQDDVPPYFKTEPVRTQVHLEGNRLVLTCMAEGSWPLEFKWLHNNRELTRFSLEYRYMITSLDRTHAGFYRCIVRNRMGALLQRQTEVQVAYMGSFEEGEKRQSVNHGEAAVIRAPRISSFPRPQVTWFRDGRKIPPSSRIAITLENTLVILSTVAPDAGRYYVQAVNDKNGDNKTSQPITLAVENVGGPADPIAPTIIIPPKNTSVVAGTSEVTMECVANARPLIKLHIVWKKDGAPLSSGISDYNRRLTIANPTVSDAGYYECEAMLRSSSVAPVTRGAYLSVLEPPQFVREPERHITAEMEKVVDIPCRAKGVPPPSITWYKDAALVEVGKLTRFKQRSDGGLQISGLLPDDTGMLQCFAHNAAGEAQTSTYLAVTSIAPNITRGPLDSTVIDGMSVVLACETSGAPRPAITWQKGERILASGSVQLPRFTLLESGSLLISPTHISDAGTYTCLATNSRGVDEASADLVVWARTRITKPPQDQSVIKGTQASMVCGVTHDPRVTVRYVWEKDGATLAVETNPRIRLDRNGSLHISQTWSGDIGTYTCRVLSAGGNDSRNAHLRVRQLPHAPEHPVATLSTVERRAINLTWAKPFDGNSPLMRYVLEMSENNAPWTILLASVDPEATSVMVKGLVPARSYQFRLCAVNDVGKGQFSKDTERVSLPEEPPTAPPQNVIASGRTNQSIMIQWQPPPESHQNGILKGYIIRYCLAGLPVGYQFKNITDADVNNLLLEDLIIWTNYEIEVAAYNSAGLGVYSSKVTEWTLQGVPTVPPGNVHAEATNSTTIRFTWNAPSPQFINGINQGYKLIAWEPAQEEEVTMVTARPNFQDSIHVGFVSGLKKFTEYFTSVLCFTTPGDGPRSSPQLVRTHEDVPGPVGHLSFNDILDTSLKVSWQEPGEKNGILTGYRISWEEYNRTNTRVTHYLPNVTLEYRVTGLTALTTYTIEVAAMTSKGQGQVSASTISSGVPPELPGAPTNLGISNIGPRSVTLQFRPGYDGKTSISRWVVEAQVGVIGEGEEWLLIYQLGNEPDARSMEVPDLNPFTYYSFRMRQVNIVGTSPPSQPSRKIQTLQAPPDIAPANVTLRTASETSLWLRWMPLPEMEYNGNPESVGYKIKYGRSDGHGKTLSHTVQDRVEREYTIEDLEEWTEYRVQVQAFNAIGSGPWSQAVVGRTRESVPSSGPTNVSALATTSSSMLVRWSEIPEADRNGLVLGYKVRYKEKDSDSQPRFWLVEGNSSRSAQLTGLGKYVLYEVQVLAFTRIGDGSPSHPPILERTLDDVPGPPMGILFPEVRTTSVRLIWQPPAAPNGIILAYQITHRLNATTANTATVEVLAPSARQYMATGLKPESVYLFRITAQTRKGWGEAAEALVVTTEKRDRPQPPSKPVVQQEDVKARSVLLSWEPGSDGLSPVRYYTIQTRELPSGRWALHSASVSHNASAFTVDRLKPFTSYKFRVKATNDIGDSEFSEESESLTTLQAAPDEAPTILSVTPHTTTSVLIRWQPPSEDKINGILLGFRIRYRELLYDGLRGFTLRGINNPGAKWAELTSLYSMRNLTRPSLTQYELDNLSKHRRYEIRMSIYNAVGEGPLSPPQEVFVGEAVPTAAPQNVAIHSATATQLDVTWEPPPLDNQNGDIQGYKIYFWEVQRRNLTERVKTLFLAENSVKLKNLTGYTAYMVSVAAFNAAGDGPRSTPTRGQTQQAAPSAPGSVKFSELTTTSVNVSWDAPQFPNGPLEGYRLVYEPCTPVDGVSKIVTVDVKGNSPLWLKVKDLAEGMTYRFRIKAKTFTYGPEIEANITTGPGEGAPGPPGVPIIVRYSSAIAIHWSSGDPGKGPITRYVIEARPSDEGLWDILIKDIPKEVTSYTFSMDILKPGVSYDFRVIAVNDYGFGTPSSPSQSVPAQKASPFYEEWWFLVVIALVGLIFILLLVFVLIIRGQSKKYSKKTDSGGNTKSGALGHGEMLSLDESSFPALELNNRRLSVKNSFCRKNGLYTRSPPRPSPGSLHYSDEDVTKYNDLIPAESSSLTEKPSEISDSQGSDSEYEVDTNTQKAHSFVNHYISDPTYYNSWRRQQKGISRAQAYSYTESDSGEPDHVTVPNSNSTQQGSLFRPKASRTPTPQNPPNPQSQQSTLYRPPSSLAPGSRAPIAGFSSFV.

The N-terminal stretch at 1-24 is a signal peptide; that stretch reads MFSSMWRLPLWTLLALHRIHSAGA. Residues 25–1936 lie on the Extracellular side of the membrane; it reads QDDVPPYFKT…ASPFYEEWWF (1912 aa). Ig-like C2-type domains lie at 30–112, 117–204, 219–298, 312–402, 406–495, and 500–589; these read PYFK…TEVQ, GSFE…QPIT, PTII…SSVA, PQFV…LAVT, PNIT…ADLV, and TRIT…AHLR. A disulfide bridge connects residues Cys52 and Cys95. A glycan (N-linked (GlcNAc...) asparagine) is linked at Asn197. Cystine bridges form between Cys241-Cys288, Cys334-Cys384, Cys427-Cys479, and Cys521-Cys573. Fibronectin type-III domains are found at residues 596-692, 697-793, 798-897, 901-995, 999-1098, 1103-1201, 1206-1303, 1307-1401, 1406-1503, 1508-1625, 1630-1726, 1730-1825, and 1828-1930; these read APEH…LPEE, PPQN…TLQG, PPGN…THED, PVGH…VPPE, APTN…TLQA, APAN…TRES, GPTN…TLDD, PPMG…TEKR, PPSK…TLQA, APTI…VGEA, APQN…TQQA, APGS…TGPG, and APGP…ASPF. A glycan (N-linked (GlcNAc...) asparagine) is linked at Asn747. Residues Asn940 and Asn952 are each glycosylated (N-linked (GlcNAc...) asparagine). Asn1106 carries N-linked (GlcNAc...) asparagine glycosylation. N-linked (GlcNAc...) asparagine glycosylation occurs at Asn1592. Residues 1712-1734 are disordered; sequence DGPRSTPTRGQTQQAAPSAPGSV. The segment covering 1716–1727 has biased composition (polar residues); that stretch reads STPTRGQTQQAA. Residues 1937–1957 traverse the membrane as a helical segment; the sequence is LVVIALVGLIFILLLVFVLII. At 1958–2176 the chain is on the cytoplasmic side; it reads RGQSKKYSKK…APIAGFSSFV (219 aa). Disordered stretches follow at residues 2013–2032, 2043–2070, and 2102–2176; these read GLYT…YSDE, AESS…VDTN, and QAYS…SSFV. Composition is skewed to polar residues over residues 2044-2070 and 2119-2129; these read ESSS…VDTN and VPNSNSTQQGS. The PDZ-binding motif lies at 2170–2176; sequence AGFSSFV.

This sequence belongs to the sidekick family. As to quaternary structure, homodimer; mediates homophilic interactions to promote cell adhesion. Interacts (via PDZ-binding motif) with MAGI1, MAGI2, DLG2, DLG3 and DLG4. In terms of tissue distribution, expressed in retinal ganglion cells (RGCs) that form synapses in distinct inner plexiform layer (IPL) sublaminae. Specifically expressed in specific subsets of retinal ganglion cells (RGCs), named W3B-RGCs, that specifically respond when the timing of the movement of a small object differs from that of the background, but not when they coincide (at protein level). Also present in excitatory amacrine cell type called VG3-ACs, that provide strong and selective input W3B-RGCs (at protein level). Expressed at low levels in the glomeruli.

The protein resides in the cell membrane. Its subcellular location is the synapse. Its function is as follows. Adhesion molecule that promotes lamina-specific synaptic connections in the retina and is specifically required for the formation of neuronal circuits that detect motion. Acts by promoting formation of synapses between two specific retinal cell types: the retinal ganglion cells W3B-RGCs and the excitatory amacrine cells VG3-ACs. Formation of synapses between these two cells plays a key role in detection of motion. Promotes synaptic connectivity via homophilic interactions. The polypeptide is Protein sidekick-2 (Mus musculus (Mouse)).